We begin with the raw amino-acid sequence, 1246 residues long: Zinc finger protein 687a (1246 aa).

Residues 24-47 are compositionally biased toward basic and acidic residues; the sequence is KEAIQSDTHGNHNEHSSVVGKERS. Positions 24–387 are disordered; that stretch reads KEAIQSDTHG…PTLVESASDA (364 aa). 2 stretches are compositionally biased toward polar residues: residues 88-111 and 163-195; these read GEFSSADESQKSPQKGPSKDSSVP and AFTNHPASTFQSLPLSNHPSVSSHLISPNFSSK. Residues 287 to 301 are compositionally biased toward low complexity; it reads SSTNPTSLTSTNNLP. A compositionally biased stretch (basic and acidic residues) spans 302-317; that stretch reads VEEKDLEHIIEERDSP. Residues 326–338 are compositionally biased toward polar residues; the sequence is QSRTSLPSNSQGA. 2 stretches are compositionally biased toward basic and acidic residues: residues 341–350 and 360–375; these read SKQRITREEA and MQEKVDYGAEATEGKS. The segment at 587 to 619 adopts a C2H2-type 1 zinc-finger fold; sequence YRCLECGDAFALERSLARHYDRRSMRIEVTCNH. Residues 696–719 form a C2H2-type 2; degenerate zinc finger; the sequence is HSCPECWSTFKGKQELVAHFQEVE. 3 consecutive C2H2-type zinc fingers follow at residues 817-840, 854-876, and 885-908; these read HKCPSCPMAFKSSSGAESHCASQH, YKCVMCRTVFTQKSLLSVHIDTH, and FKCPDCNKLFTQRTSLLEHVKDTH. Residues 907–953 are disordered; it reads THRETSNHDGTSTQNSLVKMESSDGEEWGRDEEEDKGKVSDANSAVP. A compositionally biased stretch (polar residues) spans 914–923; sequence HDGTSTQNSL. Residues 929–940 show a composition bias toward acidic residues; the sequence is SDGEEWGRDEEE. C2H2-type zinc fingers lie at residues 958–981 and 988–1011; these read WSCSQCQTHYTDKENYISHMTEQH and FPCTLCEGSFSSSSSLRRHIRVKH. The C2H2-type 8; degenerate zinc-finger motif lies at 1018–1044; it reads FYCQLCTGEKRSFSSKLILEKHIQAQH. Residues 1045–1093 form a disordered region; the sequence is AGERGTATQSQAVPQFTDGADSSSEHDAGVLGGSSVEPESRLAESTLTR. C2H2-type zinc fingers lie at residues 1137-1160 and 1210-1232; these read AQCQQCGACFASSSSLSRHLFISH and HICKVCGRYFSKPADLNTHFRTH.

It belongs to the krueppel C2H2-type zinc-finger protein family. Widely expressed with highest levels in kidney, spleen and ovary.

Its subcellular location is the nucleus. Functionally, may be involved in transcriptional regulation. This is Zinc finger protein 687a (znf687a) from Danio rerio (Zebrafish).